We begin with the raw amino-acid sequence, 454 residues long: Cobyrinate a,c-diamide synthase (454 aa).

A GATase cobBQ-type domain is found at 244–435 (KIAVAYDSAF…VHIHFLSNIA (192 aa)). Cys327 (nucleophile) is an active-site residue.

This sequence belongs to the CobB/CbiA family. Requires Mg(2+) as cofactor.

It carries out the reaction cob(II)yrinate + 2 L-glutamine + 2 ATP + 2 H2O = cob(II)yrinate a,c diamide + 2 L-glutamate + 2 ADP + 2 phosphate + 2 H(+). It functions in the pathway cofactor biosynthesis; adenosylcobalamin biosynthesis; cob(II)yrinate a,c-diamide from sirohydrochlorin (anaerobic route): step 10/10. Catalyzes the ATP-dependent amidation of the two carboxylate groups at positions a and c of cobyrinate, using either L-glutamine or ammonia as the nitrogen source. The chain is Cobyrinate a,c-diamide synthase from Thermoplasma volcanium (strain ATCC 51530 / DSM 4299 / JCM 9571 / NBRC 15438 / GSS1).